Consider the following 320-residue polypeptide: Aspartate carbamoyltransferase catalytic subunit (320 aa).

Carbamoyl phosphate contacts are provided by arginine 68 and threonine 69. Lysine 96 serves as a coordination point for L-aspartate. Carbamoyl phosphate-binding residues include arginine 118, histidine 148, and glutamine 151. Residues arginine 181 and arginine 236 each contribute to the L-aspartate site. Carbamoyl phosphate-binding residues include glycine 277 and proline 278.

It belongs to the aspartate/ornithine carbamoyltransferase superfamily. ATCase family. As to quaternary structure, heterododecamer (2C3:3R2) of six catalytic PyrB chains organized as two trimers (C3), and six regulatory PyrI chains organized as three dimers (R2).

It catalyses the reaction carbamoyl phosphate + L-aspartate = N-carbamoyl-L-aspartate + phosphate + H(+). Its pathway is pyrimidine metabolism; UMP biosynthesis via de novo pathway; (S)-dihydroorotate from bicarbonate: step 2/3. Its function is as follows. Catalyzes the condensation of carbamoyl phosphate and aspartate to form carbamoyl aspartate and inorganic phosphate, the committed step in the de novo pyrimidine nucleotide biosynthesis pathway. In Acidovorax ebreus (strain TPSY) (Diaphorobacter sp. (strain TPSY)), this protein is Aspartate carbamoyltransferase catalytic subunit.